Here is a 261-residue protein sequence, read N- to C-terminus: Cytochrome c oxidase subunit 3 (261 aa).

Over 1-15 the chain is Mitochondrial matrix; sequence MAHQAHSYHMVDPSP. The chain crosses the membrane as a helical span at residues 16-34; the sequence is WPIFGAITALLTTSGLIMW. The Mitochondrial intermembrane portion of the chain corresponds to 35–40; the sequence is FHYNSI. A helical membrane pass occupies residues 41-66; sequence ALLTAGLLSMLLVMIQWWRDVVREST. The Mitochondrial matrix segment spans residues 67-72; it reads FQGHHT. A helical transmembrane segment spans residues 73–105; that stretch reads PTVQKGLRYGMILFITSEAFFFLGFFWAFFHSS. The Mitochondrial intermembrane segment spans residues 106-128; it reads LAPTPELGGQWPPTGIKPLNPLE. A helical transmembrane segment spans residues 129–152; sequence VPLLNTAILLASGVTVTWAHHSIT. Residues 153–155 lie on the Mitochondrial matrix side of the membrane; that stretch reads EGN. A helical transmembrane segment spans residues 156-183; it reads RKQAIHALTLTILLGFYFTALQAMEYHE. The Mitochondrial intermembrane segment spans residues 184–190; that stretch reads ASFSIAD. The chain crosses the membrane as a helical span at residues 191 to 223; it reads SVYGSTFFVATGFHGLHVIIGSSFLTICLLRLI. Over 224–232 the chain is Mitochondrial matrix; that stretch reads KFHFTSNHH. The chain crosses the membrane as a helical span at residues 233 to 256; sequence FGFEAAAWYWHFVDIIWLFLYMSM. At 257–261 the chain is on the mitochondrial intermembrane side; that stretch reads YWWGS.

This sequence belongs to the cytochrome c oxidase subunit 3 family. Component of the cytochrome c oxidase (complex IV, CIV), a multisubunit enzyme composed of 14 subunits. The complex is composed of a catalytic core of 3 subunits MT-CO1, MT-CO2 and MT-CO3, encoded in the mitochondrial DNA, and 11 supernumerary subunits COX4I, COX5A, COX5B, COX6A, COX6B, COX6C, COX7A, COX7B, COX7C, COX8 and NDUFA4, which are encoded in the nuclear genome. The complex exists as a monomer or a dimer and forms supercomplexes (SCs) in the inner mitochondrial membrane with NADH-ubiquinone oxidoreductase (complex I, CI) and ubiquinol-cytochrome c oxidoreductase (cytochrome b-c1 complex, complex III, CIII), resulting in different assemblies (supercomplex SCI(1)III(2)IV(1) and megacomplex MCI(2)III(2)IV(2)).

The protein localises to the mitochondrion inner membrane. It catalyses the reaction 4 Fe(II)-[cytochrome c] + O2 + 8 H(+)(in) = 4 Fe(III)-[cytochrome c] + 2 H2O + 4 H(+)(out). Functionally, component of the cytochrome c oxidase, the last enzyme in the mitochondrial electron transport chain which drives oxidative phosphorylation. The respiratory chain contains 3 multisubunit complexes succinate dehydrogenase (complex II, CII), ubiquinol-cytochrome c oxidoreductase (cytochrome b-c1 complex, complex III, CIII) and cytochrome c oxidase (complex IV, CIV), that cooperate to transfer electrons derived from NADH and succinate to molecular oxygen, creating an electrochemical gradient over the inner membrane that drives transmembrane transport and the ATP synthase. Cytochrome c oxidase is the component of the respiratory chain that catalyzes the reduction of oxygen to water. Electrons originating from reduced cytochrome c in the intermembrane space (IMS) are transferred via the dinuclear copper A center (CU(A)) of subunit 2 and heme A of subunit 1 to the active site in subunit 1, a binuclear center (BNC) formed by heme A3 and copper B (CU(B)). The BNC reduces molecular oxygen to 2 water molecules using 4 electrons from cytochrome c in the IMS and 4 protons from the mitochondrial matrix. The polypeptide is Cytochrome c oxidase subunit 3 (MT-CO3) (Coturnix japonica (Japanese quail)).